We begin with the raw amino-acid sequence, 273 residues long: Transmembrane protein 45A (273 aa).

5 consecutive transmembrane segments (helical) span residues 8-27 (ALPG…KNIL), 55-79 (VVVL…ALIL), 108-131 (IICF…AIFV), 153-171 (LLVF…EFLV), and 217-236 (MFLS…LIGV).

Belongs to the TMEM45 family.

Its subcellular location is the membrane. The chain is Transmembrane protein 45A (Tmem45a) from Mus musculus (Mouse).